The chain runs to 364 residues: Biotin synthase (364 aa).

The interval 14 to 36 (DTIPPGTETPYASPSHARTEEAP) is disordered. The 239-residue stretch at 70-308 (RKGPLATTCG…QRDILVCGGR (239 aa)) folds into the Radical SAM core domain. The [4Fe-4S] cluster site is built by Cys88, Cys92, and Cys95. [2Fe-2S] cluster contacts are provided by Cys164 and Cys233.

This sequence belongs to the radical SAM superfamily. Biotin synthase family. In terms of assembly, homodimer. It depends on [4Fe-4S] cluster as a cofactor. Requires [2Fe-2S] cluster as cofactor.

The enzyme catalyses (4R,5S)-dethiobiotin + (sulfur carrier)-SH + 2 reduced [2Fe-2S]-[ferredoxin] + 2 S-adenosyl-L-methionine = (sulfur carrier)-H + biotin + 2 5'-deoxyadenosine + 2 L-methionine + 2 oxidized [2Fe-2S]-[ferredoxin]. Its pathway is cofactor biosynthesis; biotin biosynthesis; biotin from 7,8-diaminononanoate: step 2/2. Its function is as follows. Catalyzes the conversion of dethiobiotin (DTB) to biotin by the insertion of a sulfur atom into dethiobiotin via a radical-based mechanism. The polypeptide is Biotin synthase (Nitratidesulfovibrio vulgaris (strain DSM 19637 / Miyazaki F) (Desulfovibrio vulgaris)).